A 300-amino-acid polypeptide reads, in one-letter code: Platelet-derived growth factor D (300 aa).

The 114-residue stretch at 1-114 folds into the CUB domain; it reads QVTGNGHVQS…PGFKIYYSFV (114 aa). An intrachain disulfide couples C53 to C75. N-linked (GlcNAc...) asparagine glycosylation is present at N220.

It belongs to the PDGF/VEGF growth factor family. In terms of assembly, homodimer; disulfide-linked. Interacts with PDGFRB homodimers, and with heterodimers formed by PDGFRA and PDGFRB. In terms of processing, activated by proteolytic cleavage. Proteolytic removal of the N-terminal CUB domain releasing the core domain is necessary for unmasking the receptor-binding epitopes of the core domain. Cleavage after Arg-191 or Arg-193 by urokinase plasminogen activator gives rise to the active form.

Its subcellular location is the secreted. Its function is as follows. Growth factor that plays an essential role in the regulation of embryonic development, cell proliferation, cell migration, survival and chemotaxis. Potent mitogen for cells of mesenchymal origin. Plays an important role in wound healing. Induces macrophage recruitment, increased interstitial pressure, and blood vessel maturation during angiogenesis. Can initiate events that lead to a mesangial proliferative glomerulonephritis, including influx of monocytes and macrophages and production of extracellular matrix. This Oryctolagus cuniculus (Rabbit) protein is Platelet-derived growth factor D (PDGFD).